Here is a 125-residue protein sequence, read N- to C-terminus: Large ribosomal subunit protein uL22 (125 aa).

It belongs to the universal ribosomal protein uL22 family. Part of the 50S ribosomal subunit.

Functionally, this protein binds specifically to 23S rRNA; its binding is stimulated by other ribosomal proteins, e.g. L4, L17, and L20. It is important during the early stages of 50S assembly. It makes multiple contacts with different domains of the 23S rRNA in the assembled 50S subunit and ribosome. The globular domain of the protein is located near the polypeptide exit tunnel on the outside of the subunit, while an extended beta-hairpin is found that lines the wall of the exit tunnel in the center of the 70S ribosome. The protein is Large ribosomal subunit protein uL22 of Acetivibrio thermocellus (strain ATCC 27405 / DSM 1237 / JCM 9322 / NBRC 103400 / NCIMB 10682 / NRRL B-4536 / VPI 7372) (Clostridium thermocellum).